A 547-amino-acid polypeptide reads, in one-letter code: Chaperonin GroEL (547 aa).

Residues 30–33, K51, 87–91, G415, 479–481, and D495 contribute to the ATP site; these read TLGP, DGTTT, and NAA.

The protein belongs to the chaperonin (HSP60) family. Forms a cylinder of 14 subunits composed of two heptameric rings stacked back-to-back. Interacts with the co-chaperonin GroES.

It is found in the cytoplasm. It catalyses the reaction ATP + H2O + a folded polypeptide = ADP + phosphate + an unfolded polypeptide.. Its function is as follows. Together with its co-chaperonin GroES, plays an essential role in assisting protein folding. The GroEL-GroES system forms a nano-cage that allows encapsulation of the non-native substrate proteins and provides a physical environment optimized to promote and accelerate protein folding. This is Chaperonin GroEL from Acinetobacter baumannii (strain ACICU).